Reading from the N-terminus, the 862-residue chain is Short transient receptor potential channel 7 (862 aa).

Residues 1-21 form a disordered region; it reads MLGSNTFKNMQRRHTTLREKG. Over 1–351 the chain is Cytoplasmic; that stretch reads MLGSNTFKNM…GLRQQSIAVK (351 aa). Residues 10-21 show a composition bias toward basic residues; sequence MQRRHTTLREKG. Threonine 15 is modified (phosphothreonine; by PKG/PRKG1). ANK repeat units follow at residues 42 to 71, 77 to 106, 108 to 134, and 163 to 192; these read PEEE…TLNF, MGQN…LARV, DALL…FAQG, and HDIT…RIER. The helical transmembrane segment at 352–372 threads the bilayer; it reads FLAVFGVSIGLPFLAIAYWIA. The Extracellular portion of the chain corresponds to 373–383; it reads PCSKLGQTLRS. A helical transmembrane segment spans residues 384 to 404; it reads PFMKFVAHAVSFTIFLGLLVV. Residues 405–465 lie on the Cytoplasmic side of the membrane; the sequence is NASDRFEGVK…KEIWEEGPRE (61 aa). A helical transmembrane segment spans residues 466–486; sequence YVLHLWNLLDFGMLSIFVASF. The Extracellular segment spans residues 487-537; it reads TARFMAFLKASEAQLYVDQYVQDVTLHNVSLPPEVAYFTYARDKWWPSDPQ. Residue asparagine 514 is glycosylated (N-linked (GlcNAc...) asparagine). A helical membrane pass occupies residues 538 to 558; the sequence is IISEGLYAIAVVLSFSRIAYI. Residues 559 to 581 lie on the Cytoplasmic side of the membrane; it reads LPANESFGPLQISLGRTVKDIFK. A helical membrane pass occupies residues 582–602; it reads FMVIFIMVFVAFMIGMFNLYS. The Extracellular segment spans residues 603 to 651; sequence YYRGAKYNPAFTTVEESFKTLFWSIFGLSEVISVVLKYDHKFIENIGYV. A helical transmembrane segment spans residues 652–672; that stretch reads LYGVYNVTMVVVLLNMLIAMI. Residues 673-862 are Cytoplasmic-facing; sequence NNSYQEIEED…HLRVNQGKDI (190 aa).

Belongs to the transient receptor (TC 1.A.4) family. STrpC subfamily. TRPC7 sub-subfamily. In terms of assembly, interacts with MX1 and RNF24. Interacts (via ANK-repeat domains) with PRKG1. In terms of processing, phosphorylation by PRKG1 at Thr-15 negatively regulates TRPC7 activity.

The protein localises to the cell membrane. It is found in the nucleus envelope. The enzyme catalyses Ca(2+)(in) = Ca(2+)(out). Forms a receptor-activated non-selective calcium permeant cation channel. Probably is operated by a phosphatidylinositol second messenger system activated by receptor tyrosine kinases or G-protein coupled receptors. Activated by diacylglycerol (DAG). May also be activated by intracellular calcium store depletion. This is Short transient receptor potential channel 7 (Trpc7) from Mus musculus (Mouse).